A 205-amino-acid polypeptide reads, in one-letter code: Small ribosomal subunit protein uS4 (205 aa).

The region spanning 94 to 157 (SRLDTVVYRM…QQIPLIQESI (64 aa)) is the S4 RNA-binding domain.

The protein belongs to the universal ribosomal protein uS4 family. As to quaternary structure, part of the 30S ribosomal subunit. Contacts protein S5. The interaction surface between S4 and S5 is involved in control of translational fidelity.

In terms of biological role, one of the primary rRNA binding proteins, it binds directly to 16S rRNA where it nucleates assembly of the body of the 30S subunit. Functionally, with S5 and S12 plays an important role in translational accuracy. The polypeptide is Small ribosomal subunit protein uS4 (Rickettsia prowazekii (strain Madrid E)).